The chain runs to 214 residues: ATP phosphoribosyltransferase (214 aa).

Belongs to the ATP phosphoribosyltransferase family. Short subfamily. In terms of assembly, heteromultimer composed of HisG and HisZ subunits.

The protein localises to the cytoplasm. It catalyses the reaction 1-(5-phospho-beta-D-ribosyl)-ATP + diphosphate = 5-phospho-alpha-D-ribose 1-diphosphate + ATP. The protein operates within amino-acid biosynthesis; L-histidine biosynthesis; L-histidine from 5-phospho-alpha-D-ribose 1-diphosphate: step 1/9. Its function is as follows. Catalyzes the condensation of ATP and 5-phosphoribose 1-diphosphate to form N'-(5'-phosphoribosyl)-ATP (PR-ATP). Has a crucial role in the pathway because the rate of histidine biosynthesis seems to be controlled primarily by regulation of HisG enzymatic activity. This is ATP phosphoribosyltransferase from Marinobacter nauticus (strain ATCC 700491 / DSM 11845 / VT8) (Marinobacter aquaeolei).